A 107-amino-acid polypeptide reads, in one-letter code: uncharacterized protein (107 aa).

Residues 88–97 (EEKKEKDKGK) show a composition bias toward basic and acidic residues. Residues 88–107 (EEKKEKDKGKKGLLSRLKFW) are disordered. The segment covering 98 to 107 (KGLLSRLKFW) has biased composition (basic residues).

This is an uncharacterized protein from Methanocaldococcus jannaschii (strain ATCC 43067 / DSM 2661 / JAL-1 / JCM 10045 / NBRC 100440) (Methanococcus jannaschii).